The primary structure comprises 305 residues: Beta-carotene 3-hydroxylase, chloroplastic (305 aa).

The transit peptide at 1–41 directs the protein to the chloroplast; the sequence is MAFAMSSSLTLFQYQSFGKKPFFSRRRDFAGCSMMNPLVAR. The next 2 helical transmembrane spans lie at 98–118 and 129–149; these read YLVA…AAVY and AVPL…AVGM. Residues 146 to 272 enclose the Fatty acid hydroxylase domain; that stretch reads AVGMEYWARW…KFNGVPYGLF (127 aa). The Histidine box-1 motif lies at 157–162; that stretch reads HRALWH. The Histidine box-2 motif lies at 169 to 173; sequence HESHH. Transmembrane regions (helical) follow at residues 184–204 and 207–227; these read DVFA…GFFH and FFSG…MAYM. Positions 230-235 match the Histidine box-3 motif; it reads HDGLVH. Residues 256-260 carry the Histidine box-4 motif; it reads HQIHH.

Belongs to the sterol desaturase family. As to quaternary structure, homodimer. Expressed in flower buds and lips. Detected in roots and leaves.

It localises to the plastid. Its subcellular location is the chloroplast membrane. The catalysed reaction is all-trans-beta-carotene + 4 reduced [2Fe-2S]-[ferredoxin] + 2 O2 + 4 H(+) = all-trans-zeaxanthin + 4 oxidized [2Fe-2S]-[ferredoxin] + 2 H2O. In terms of biological role, nonheme diiron monooxygenase involved in the biosynthesis of xanthophylls. Specific for beta-ring hydroxylations of beta-carotene. Uses ferredoxin as an electron donor. This chain is Beta-carotene 3-hydroxylase, chloroplastic (BHY), found in Oncidium hybrid cultivar (Orchid).